The sequence spans 434 residues: Putative neutral sphingomyelinase (434 aa).

Glu83 contacts Mg(2+). His318 serves as the catalytic Proton acceptor. 2 consecutive transmembrane segments (helical) span residues 366-388 (IFFF…FEVF) and 392-414 (FAVL…LIGL).

The protein belongs to the neutral sphingomyelinase family.

Its subcellular location is the membrane. The enzyme catalyses an N-(acyl)-sphingosylphosphocholine + H2O = an N-acyl-sphingoid base + phosphocholine + H(+). The catalysed reaction is a sphingomyelin + H2O = phosphocholine + an N-acylsphing-4-enine + H(+). It catalyses the reaction an N-acyl-15-methylhexadecasphing-4-enine-1-phosphocholine + H2O = an N-acyl-15-methylhexadecasphing-4-enine + phosphocholine + H(+). The protein operates within lipid metabolism; sphingolipid metabolism. In terms of biological role, catalyzes the hydrolysis of sphingomyelin producing a ceramide (N-acyl-sphingoid base) and a phosphocholine. C.elegans contain specific sphingoid bases, which are unique or different in structure compared to the sphingoid bases found in other animals. Two examples of these distinctive compounds are: 15-methylhexadecasphinganine and 15-methylhexadecasphing-4-enine. The protein is Putative neutral sphingomyelinase of Caenorhabditis elegans.